The following is a 276-amino-acid chain: NADPH-dependent 7-cyano-7-deazaguanine reductase (276 aa).

83–85 lines the substrate pocket; sequence IES. 85–86 provides a ligand contact to NADPH; it reads SK. The Thioimide intermediate role is filled by Cys184. Asp191 (proton donor) is an active-site residue. Residue 223–224 coordinates substrate; sequence HE. 252–253 is an NADPH binding site; it reads RG.

The protein belongs to the GTP cyclohydrolase I family. QueF type 2 subfamily. As to quaternary structure, homodimer.

The protein resides in the cytoplasm. It catalyses the reaction 7-aminomethyl-7-carbaguanine + 2 NADP(+) = 7-cyano-7-deazaguanine + 2 NADPH + 3 H(+). Its pathway is tRNA modification; tRNA-queuosine biosynthesis. In terms of biological role, catalyzes the NADPH-dependent reduction of 7-cyano-7-deazaguanine (preQ0) to 7-aminomethyl-7-deazaguanine (preQ1). This is NADPH-dependent 7-cyano-7-deazaguanine reductase from Pseudomonas putida (strain ATCC 47054 / DSM 6125 / CFBP 8728 / NCIMB 11950 / KT2440).